The chain runs to 249 residues: tRNA (guanine-N(1)-)-methyltransferase (249 aa).

S-adenosyl-L-methionine contacts are provided by residues G113 and 133 to 138 (IGDFVV).

It belongs to the RNA methyltransferase TrmD family. In terms of assembly, homodimer.

It is found in the cytoplasm. The enzyme catalyses guanosine(37) in tRNA + S-adenosyl-L-methionine = N(1)-methylguanosine(37) in tRNA + S-adenosyl-L-homocysteine + H(+). Functionally, specifically methylates guanosine-37 in various tRNAs. The chain is tRNA (guanine-N(1)-)-methyltransferase from Neisseria meningitidis serogroup C / serotype 2a (strain ATCC 700532 / DSM 15464 / FAM18).